Here is a 367-residue protein sequence, read N- to C-terminus: UDP-D-xylose:L-fucose alpha-1,3-D-xylosyltransferase (367 aa).

The segment covering 1–10 (MAQKQQTLHQ) has biased composition (polar residues). Positions 1-21 (MAQKQQTLHQQRPFSSSPRSY) are disordered. Over 1-35 (MAQKQQTLHQQRPFSSSPRSYSSISNRPIFLLSRN) the chain is Cytoplasmic. A compositionally biased stretch (low complexity) spans 12 to 21 (RPFSSSPRSY). The helical; Signal-anchor for type II membrane protein transmembrane segment at 36–56 (GLLLVLLALFLLLGVFLPWPG) threads the bilayer. At 57–367 (SPLLLFPNKV…ALESPLGKLQ (311 aa)) the chain is on the lumenal side. 3 N-linked (GlcNAc...) asparagine glycosylation sites follow: Asn85, Asn98, and Asn173. The short motif at 196–198 (DVD) is the DXD motif element. 2 N-linked (GlcNAc...) asparagine glycosylation sites follow: Asn228 and Asn292.

This sequence belongs to the glycosyltransferase 77 family. The cofactor is Mn(2+). Mg(2+) serves as cofactor. In terms of processing, glycosylated. In terms of tissue distribution, expressed in roots, rosette leaves, stems and flowers.

The protein localises to the golgi apparatus membrane. Catalyzes the transfer of D-xylose from UDP-alpha-D-xylose onto L-fucose. Probably involved in the biosynthesis of rhamnogalacturonan II (RG-II) through xylosylation of the internal fucose moiety of the A-chain of RG-II, a structurally complex pectic polysaccharide of the primary cell wall. RG-II is essential for the cell wall integrity of rapidly growing tissues such as roots and pollen tube growth and elongation. The polypeptide is UDP-D-xylose:L-fucose alpha-1,3-D-xylosyltransferase (Arabidopsis thaliana (Mouse-ear cress)).